The following is a 347-amino-acid chain: F-box protein At2g14500 (347 aa).

The F-box domain occupies 6–52; the sequence is PLTLSELPHDLLRNIFNRLSFADFHRATWNSISKQTAPPKTKSPWLI.

This chain is F-box protein At2g14500, found in Arabidopsis thaliana (Mouse-ear cress).